The chain runs to 502 residues: Glycerol kinase (502 aa).

Thr-14 contacts ADP. Positions 14, 15, and 16 each coordinate ATP. Residue Thr-14 participates in sn-glycerol 3-phosphate binding. Arg-18 is an ADP binding site. Sn-glycerol 3-phosphate contacts are provided by Arg-84, Glu-85, Tyr-136, and Asp-246. 5 residues coordinate glycerol: Arg-84, Glu-85, Tyr-136, Asp-246, and Gln-247. ADP is bound by residues Thr-268 and Gly-311. Residues Thr-268, Gly-311, Gln-315, and Gly-412 each contribute to the ATP site. Gly-412 and Asn-416 together coordinate ADP.

This sequence belongs to the FGGY kinase family. As to quaternary structure, homotetramer and homodimer (in equilibrium). Heterodimer with EIIA-Glc. Binds 1 zinc ion per glycerol kinase EIIA-Glc dimer. The zinc ion is important for dimerization.

The catalysed reaction is glycerol + ATP = sn-glycerol 3-phosphate + ADP + H(+). Its pathway is polyol metabolism; glycerol degradation via glycerol kinase pathway; sn-glycerol 3-phosphate from glycerol: step 1/1. With respect to regulation, activity of this regulatory enzyme is affected by several metabolites. Allosterically and non-competitively inhibited by fructose 1,6-bisphosphate (FBP) and unphosphorylated phosphocarrier protein EIIA-Glc (III-Glc), an integral component of the bacterial phosphotransferase (PTS) system. Its function is as follows. Key enzyme in the regulation of glycerol uptake and metabolism. Catalyzes the phosphorylation of glycerol to yield sn-glycerol 3-phosphate. In Escherichia coli O8 (strain IAI1), this protein is Glycerol kinase.